A 149-amino-acid polypeptide reads, in one-letter code: Lipoprotein signal peptidase (149 aa).

Transmembrane regions (helical) follow at residues tryptophan 58 to leucine 78 and alanine 85 to methionine 105. Catalysis depends on residues aspartate 111 and aspartate 127. The chain crosses the membrane as a helical span at residues isoleucine 122–phenylalanine 142.

Belongs to the peptidase A8 family.

Its subcellular location is the cell membrane. The catalysed reaction is Release of signal peptides from bacterial membrane prolipoproteins. Hydrolyzes -Xaa-Yaa-Zaa-|-(S,diacylglyceryl)Cys-, in which Xaa is hydrophobic (preferably Leu), and Yaa (Ala or Ser) and Zaa (Gly or Ala) have small, neutral side chains.. The protein operates within protein modification; lipoprotein biosynthesis (signal peptide cleavage). Functionally, this protein specifically catalyzes the removal of signal peptides from prolipoproteins. This Brevibacillus brevis (strain 47 / JCM 6285 / NBRC 100599) protein is Lipoprotein signal peptidase.